Here is a 79-residue protein sequence, read N- to C-terminus: Aquaporin Z (79 aa).

The next 2 helical transmembrane spans lie at 4–24 (LFAEFFGTYWLVFGGCGSAVF) and 33–53 (IGFAGVALAFGLTVLTMAYAV). The NPA 1 signature appears at 62-64 (NPA).

This sequence belongs to the MIP/aquaporin (TC 1.A.8) family. Homotetramer.

Its subcellular location is the cell membrane. The catalysed reaction is H2O(in) = H2O(out). Its function is as follows. Channel that permits osmotically driven movement of water in both directions. It is involved in the osmoregulation and in the maintenance of cell turgor during volume expansion in rapidly growing cells. It mediates rapid entry or exit of water in response to abrupt changes in osmolarity. This Flavobacterium johnsoniae (Cytophaga johnsonae) protein is Aquaporin Z.